The primary structure comprises 629 residues: Phosphoglucomutase, chloroplastic (629 aa).

A chloroplast-targeting transit peptide spans 1-69 (MSSTYARFDT…SSSSGPIIAG (69 aa)). Alpha-D-glucose 1,6-bisphosphate is bound by residues Arg94 and Ser187. Ser187 acts as the Phosphoserine intermediate in catalysis. Mg(2+) is bound by residues Ser187, Asp352, Asp354, and Asp356. The residue at position 187 (Ser187) is a Phosphoserine. Residues Asp356, Arg357, Thr420, Glu439, Ser441, and Lys452 each coordinate alpha-D-glucose 1,6-bisphosphate.

Belongs to the phosphohexose mutase family. Monomer. Requires Mg(2+) as cofactor.

The protein resides in the plastid. The protein localises to the chloroplast. It catalyses the reaction alpha-D-glucose 1-phosphate = alpha-D-glucose 6-phosphate. The catalysed reaction is O-phospho-L-seryl-[protein] + alpha-D-glucose 1-phosphate = alpha-D-glucose 1,6-bisphosphate + L-seryl-[protein]. It carries out the reaction alpha-D-glucose 1,6-bisphosphate + L-seryl-[protein] = O-phospho-L-seryl-[protein] + alpha-D-glucose 6-phosphate. Its activity is regulated as follows. Inhibited by the Calvin cycle intermediates fructose-1,6-bisphosphate and ribulose-1,5-bisphosphate. Functionally, catalyzes the reversible isomerization of alpha-D-glucose 1-phosphate to alpha-D-glucose 6-phosphate. The mechanism proceeds via the intermediate compound alpha-D-glucose 1,6-bisphosphate. This enzyme participates in both the breakdown and synthesis of glucose. This is Phosphoglucomutase, chloroplastic (PGMP) from Brassica napus (Rape).